The sequence spans 335 residues: Coiled-coil domain-containing protein 68 (335 aa).

The stretch at 101–305 (QLLEMNKENE…KTQVALSSET (205 aa)) forms a coiled coil.

As to quaternary structure, interacts with CEP170. In terms of tissue distribution, expressed in bone marrow, colon, small intestine, spleen, testis, trachea and cutaneous T-cell lymphoma (CTCL).

It is found in the cytoplasm. The protein resides in the cytoskeleton. Its subcellular location is the microtubule organizing center. The protein localises to the centrosome. It localises to the centriole. Centriolar protein required for centriole subdistal appendage assembly and microtubule anchoring in interphase cells. Together with CCDC120, cooperate with subdistal appendage components ODF2, NIN and CEP170 for hierarchical subdistal appendage assembly. The sequence is that of Coiled-coil domain-containing protein 68 (CCDC68) from Homo sapiens (Human).